We begin with the raw amino-acid sequence, 419 residues long: RING finger protein 150 (419 aa).

Residues 1–34 form the signal peptide; it reads MALSVIQACRSLALSTWLLSFCFVHLLCLDFTVA. Residues 35–197 are Extracellular-facing; the sequence is EKEEWYTAFV…NLQKYVSRTS (163 aa). The PA domain occupies 70–172; sequence SLKREARGVL…PKGRELVLLM (103 aa). Residues 198–218 form a helical membrane-spanning segment; it reads VVFVSISFIILMIISLAWLVF. Residues 219–419 are Cytoplasmic-facing; the sequence is YYIQRFRYAN…IDTPTDDPKC (201 aa). The RING-type; atypical zinc-finger motif lies at 267–308; it reads CAVCIEGYKPNDVVRILPCRHLFHKCCVDPWLVDHRTCPMCK. The tract at residues 374-419 is disordered; that stretch reads SEPLSQDTMPTEQSELQPIASGSSDVSLTTGAGHSDIDTPTDDPKC. Over residues 376 to 405 the composition is skewed to polar residues; the sequence is PLSQDTMPTEQSELQPIASGSSDVSLTTGA.

The protein localises to the membrane. The protein is RING finger protein 150 (rnf150) of Danio rerio (Zebrafish).